The following is a 183-amino-acid chain: uncharacterized protein (183 aa).

This sequence belongs to the asfivirus S183L family.

This is an uncharacterized protein from Ornithodoros (relapsing fever ticks).